The chain runs to 1079 residues: Integrator complex subunit 3 homolog (1079 aa).

Disordered stretches follow at residues 544 to 574 (ETEA…DDLP), 925 to 949 (YPSS…TPSA), and 1010 to 1079 (AVGR…NDSD). Residues 938–949 (KGSSAASSTPSA) show a composition bias toward low complexity. Phosphoserine occurs at positions 1049, 1050, 1054, and 1055. A compositionally biased stretch (basic residues) spans 1062-1073 (HKITQAAKKRKK).

It belongs to the Integrator subunit 3 family. In terms of assembly, belongs to the multiprotein complex Integrator, at least composed of IntS1, IntS2, IntS3, IntS4, omd/IntS5, IntS6, defl/IntS7, IntS8, IntS9, IntS10, IntS11, IntS12, asun/IntS13, IntS14 and IntS15. The core complex associates with protein phosphatase 2A subunits mts/PP2A and Pp2A-29B, to form the Integrator-PP2A (INTAC) complex.

The protein resides in the nucleus. Its subcellular location is the cytoplasm. In terms of biological role, component of the integrator complex, a multiprotein complex that terminates RNA polymerase II (Pol II) transcription in the promoter-proximal region of genes. The integrator complex provides a quality checkpoint during transcription elongation by driving premature transcription termination of transcripts that are unfavorably configured for transcriptional elongation: the complex terminates transcription by (1) catalyzing dephosphorylation of the C-terminal domain (CTD) of Pol II subunit Polr2A/Rbp1 and Spt5, and (2) degrading the exiting nascent RNA transcript via endonuclease activity. The integrator complex is also involved in the 3'-end processing of the U7 snRNA, and also the spliceosomal snRNAs U1, U2, U4 and U5. The protein is Integrator complex subunit 3 homolog (IntS3) of Drosophila mojavensis (Fruit fly).